The following is a 362-amino-acid chain: MGNTFGHLFRVTTFGESHGGGVGVVIDGCPPLLEISQAEIQAELDRRRPGQSRITTPRQETDTCEILSGVFEGKTLGTPIAILVRNKDTRPQDYQEMAQVYRPSHADATYDAKYGIRNWQGGGRSSARETIGRVAAGAIAKKILQQVAGVEIIAYVRRIKDLEAPIDPNTVTMEQVESNIVRCPHPDYAEKMIALIDQVRRDANSIGGVVECVARNVPKGLGSPVFDKLEADLAKGVMSLPATKGFEIGSGFAGTLLTGQEHNDEFYSENGDIRTVTNRSGGVQGGISNGENIIIRAAFKPTATIGQAQRTVNQAGESTILAAKGRHDPCVLPRAVPMVEAMVALVLCDHLLRDRAQCHLLT.

NADP(+) contacts are provided by R47 and R53. Residues 124 to 126 (RSS), G285, 300 to 304 (KPTAT), and R326 each bind FMN.

This sequence belongs to the chorismate synthase family. In terms of assembly, homotetramer. Requires FMNH2 as cofactor.

It catalyses the reaction 5-O-(1-carboxyvinyl)-3-phosphoshikimate = chorismate + phosphate. The protein operates within metabolic intermediate biosynthesis; chorismate biosynthesis; chorismate from D-erythrose 4-phosphate and phosphoenolpyruvate: step 7/7. Its function is as follows. Catalyzes the anti-1,4-elimination of the C-3 phosphate and the C-6 proR hydrogen from 5-enolpyruvylshikimate-3-phosphate (EPSP) to yield chorismate, which is the branch point compound that serves as the starting substrate for the three terminal pathways of aromatic amino acid biosynthesis. This reaction introduces a second double bond into the aromatic ring system. The protein is Chorismate synthase of Cyanothece sp. (strain PCC 7425 / ATCC 29141).